The following is a 373-amino-acid chain: Probable pectin lyase C (373 aa).

Residues 1 to 18 form the signal peptide; it reads MKVPFLQLLCLNAALASA. 2 disulfides stabilise this stretch: Cys81-Cys100 and Cys90-Cys220. A glycan (N-linked (GlcNAc...) asparagine) is linked at Asn123. The active site involves Arg250. Cys316 and Cys324 form a disulfide bridge.

This sequence belongs to the polysaccharide lyase 1 family.

The protein resides in the secreted. The catalysed reaction is Eliminative cleavage of (1-&gt;4)-alpha-D-galacturonan methyl ester to give oligosaccharides with 4-deoxy-6-O-methyl-alpha-D-galact-4-enuronosyl groups at their non-reducing ends.. Its function is as follows. Pectinolytic enzymes consist of four classes of enzymes: pectin lyase, polygalacturonase, pectin methylesterase and rhamnogalacturonase. Among pectinolytic enzymes, pectin lyase is the most important in depolymerization of pectin, since it cleaves internal glycosidic bonds of highly methylated pectins. The polypeptide is Probable pectin lyase C (pelC) (Aspergillus niger (strain ATCC MYA-4892 / CBS 513.88 / FGSC A1513)).